The chain runs to 78 residues: Protein GPR15LG (78 aa).

Positions 1-24 are cleaved as a signal peptide; that stretch reads MRLLALSGLLCMLLLCFCIFSSEG. 2 cysteine pairs are disulfide-bonded: Cys-37-Cys-60 and Cys-38-Cys-57.

Interacts with SUSD2; the interaction is direct. As to expression, highly abundant in the testis, colon, eye, and tongue. Detected in the epithelial layer of the colon, but not the small intestine.

The protein localises to the secreted. Its function is as follows. Highly cationic protein that has multiple functions. Acts as a chemotactic factor that mediates lymphocytes recruitment to epithelia through binding and activation of the G-protein coupled receptor GPR15. May be a tumor suppressor; together with SUSD2 has a growth inhibitory effect on colon cancer cells which includes G1 cell cycle arrest. May regulate keratinocyte proliferation. In addition, through activation of Mas-related G protein-coupled receptors (MRGPRs) contributes to pruritogenesis by activating itch-selective sensory neurons and mast cells degranulation. In terms of biological role, has antimicrobial activity against Gram-positive bacteria, including Staphylococcus aureus and Actinomyces spec., and Mycoplasma hominis and lentivirus. This chain is Protein GPR15LG (Gpr15lg), found in Mus musculus (Mouse).